The following is a 251-amino-acid chain: MPKRDLPWRSMAGTSKVSRNANYSPRAGIGPRINKAAEWVNRPMYRKPRMYRTLRTTDVARGCEGPCKVQSFEQRHDISHIGKVMCISDVTRGNGITHRVGKRFCVKSVYILGKIWMDENIKLKNHTNSVMFWLVRDRRPYGTPMDIWTVFNMFDNEPSTATVKNDLRDRYQVMHKFYGKVTGGQYASNEQAIVKRFWKVNNHVVYNHQEAGKYENHTENALLLYMACTHASNPVYATLKIRIYFYDSITN.

A Bipartite nuclear localization signal motif is present at residues 3–20 (KRDLPWRSMAGTSKVSRN). The Nuclear localization signal signature appears at 35-49 (KAAEWVNRPMYRKPR). A zinc finger spans residues 63–80 (CEGPCKVQSFEQRHDISH). Positions 96–117 (ITHRVGKRFCVKSVYILGKIWM) match the Nuclear export signal motif. The Bipartite nuclear localization signal signature appears at 195–242 (KRFWKVNNHVVYNHQEAGKYENHTENALLLYMACTHASNPVYATLKIR).

It belongs to the geminiviridae capsid protein family. Homomultimer. Binds to single-stranded and double-stranded viral DNA. Interacts (via nuclear localization signals) with host importin alpha-1a.

It is found in the virion. Its subcellular location is the host nucleus. In terms of biological role, encapsidates the viral DNA into characteristic twinned ('geminate') particles. Binds the genomic viral ssDNA and shuttles it into and out of the cell nucleus. The CP of bipartite geminiviruses is not required for cell-to-cell or systemic movement. This Tomato mottle virus (isolate Florida) (ToMoV) protein is Capsid protein.